The primary structure comprises 749 residues: Homeobox-leucine zipper protein ROC7 (749 aa).

Residues 26 to 98 (LDQHQQHQHQ…KKRYHRHTQH (73 aa)) form a disordered region. A compositionally biased stretch (basic and acidic residues) spans 46–57 (SDGRAPRDELEM). Over residues 68-78 (SGGGGGGGGSG) the composition is skewed to gly residues. The span at 86-97 (RPRKKRYHRHTQ) shows a compositional bias: basic residues. Residues 88–147 (RKKRYHRHTQHQIQELEAFFKECPHPDDKQRKELSRELGLEPLQVKFWFQNKRTQMKTQH) constitute a DNA-binding region (homeobox). Positions 137 to 218 (QNKRTQMKTQ…DRISAIAAKY (82 aa)) form a coiled coil. The START domain occupies 256 to 494 (ADFDKPLVIE…LERQCERLAS (239 aa)).

It belongs to the HD-ZIP homeobox family. Class IV subfamily.

Its subcellular location is the nucleus. Its function is as follows. Probable transcription factor. In Oryza sativa subsp. indica (Rice), this protein is Homeobox-leucine zipper protein ROC7 (ROC7).